Here is a 266-residue protein sequence, read N- to C-terminus: Undecaprenyl-diphosphatase 1 (266 aa).

8 helical membrane passes run 1 to 21 (MDTF…FLPI), 39 to 59 (QGLS…VIYF), 87 to 107 (WWII…KDFI), 114 to 134 (TGVI…ADKM), 149 to 169 (ALLI…RSGA), 183 to 203 (AAAR…AILV), 218 to 238 (ALTL…HYFL), and 246 to 266 (MTPF…FIFL).

This sequence belongs to the UppP family.

The protein localises to the cell inner membrane. It carries out the reaction di-trans,octa-cis-undecaprenyl diphosphate + H2O = di-trans,octa-cis-undecaprenyl phosphate + phosphate + H(+). Its function is as follows. Catalyzes the dephosphorylation of undecaprenyl diphosphate (UPP). Confers resistance to bacitracin. This is Undecaprenyl-diphosphatase 1 from Shewanella oneidensis (strain ATCC 700550 / JCM 31522 / CIP 106686 / LMG 19005 / NCIMB 14063 / MR-1).